Consider the following 296-residue polypeptide: Formamidopyrimidine-DNA glycosylase (296 aa).

Residue P2 is the Schiff-base intermediate with DNA of the active site. The Proton donor role is filled by E3. K58 (proton donor; for beta-elimination activity) is an active-site residue. The DNA site is built by H104, R126, and K169. An FPG-type zinc finger spans residues 260 to 296 (SVYDRAGEACRKPGCDGTVTRIVQAGRSTFHCPRCQK). R286 acts as the Proton donor; for delta-elimination activity in catalysis.

This sequence belongs to the FPG family. Monomer. The cofactor is Zn(2+).

The catalysed reaction is Hydrolysis of DNA containing ring-opened 7-methylguanine residues, releasing 2,6-diamino-4-hydroxy-5-(N-methyl)formamidopyrimidine.. It carries out the reaction 2'-deoxyribonucleotide-(2'-deoxyribose 5'-phosphate)-2'-deoxyribonucleotide-DNA = a 3'-end 2'-deoxyribonucleotide-(2,3-dehydro-2,3-deoxyribose 5'-phosphate)-DNA + a 5'-end 5'-phospho-2'-deoxyribonucleoside-DNA + H(+). Its function is as follows. Involved in base excision repair of DNA damaged by oxidation or by mutagenic agents. Acts as a DNA glycosylase that recognizes and removes damaged bases. Has a preference for oxidized purines, such as 7,8-dihydro-8-oxoguanine (8-oxoG). Has AP (apurinic/apyrimidinic) lyase activity and introduces nicks in the DNA strand. Cleaves the DNA backbone by beta-delta elimination to generate a single-strand break at the site of the removed base with both 3'- and 5'-phosphates. This is Formamidopyrimidine-DNA glycosylase from Sinorhizobium fredii (strain NBRC 101917 / NGR234).